Here is a 197-residue protein sequence, read N- to C-terminus: Heart- and neural crest derivatives-expressed protein 1 (197 aa).

Disordered regions lie at residues 61 to 94 and 155 to 184; these read VVGPSQTSGRIENLGGKLGRRKGAPPKKERRRTE and VDGKRRREPQPTEGYWGAAPAGEKKLKGRT. The span at 78–90 shows a compositional bias: basic residues; the sequence is LGRRKGAPPKKER. One can recognise a bHLH domain in the interval 80-132; it reads RRKGAPPKKERRRTESINSAFAELRECIPNVPADTKLSKIKTLRLATSYIGYL.

As to quaternary structure, efficient DNA binding requires dimerization with another bHLH protein. Highly expressed in the adult heart and expressed at lower levels in the intestine and gall bladder.

It is found in the nucleus. The protein resides in the nucleolus. In terms of biological role, plays an essential role in cardiac morphogenesis. In Xenopus laevis (African clawed frog), this protein is Heart- and neural crest derivatives-expressed protein 1 (hand1).